We begin with the raw amino-acid sequence, 637 residues long: DNA primase (637 aa).

The CHC2-type zinc finger occupies 39-63 (CPFHGEKTPSFNVNAEKGFYHCFGC). The Toprim domain occupies 257-338 (HEVYLMEGFM…QIVKVPEGLD (82 aa)). Mg(2+)-binding residues include E263, D307, and D309.

The protein belongs to the DnaG primase family. As to quaternary structure, monomer. Interacts with DnaB. Requires Zn(2+) as cofactor. The cofactor is Mg(2+).

It catalyses the reaction ssDNA + n NTP = ssDNA/pppN(pN)n-1 hybrid + (n-1) diphosphate.. Its function is as follows. RNA polymerase that catalyzes the synthesis of short RNA molecules used as primers for DNA polymerase during DNA replication. This Lactococcus lactis subsp. lactis (strain IL1403) (Streptococcus lactis) protein is DNA primase.